The primary structure comprises 173 residues: Alpha-crystallin A chain (173 aa).

An N-acetylmethionine modification is found at methionine 1. Residues 1 to 63 (MDIAIQHPWF…RSVLDSGISE (63 aa)) form a required for complex formation with BFSP1 and BFSP2 region. Glutamine 6 is subject to Deamidated glutamine; partial. Serine 45 carries the phosphoserine modification. Glutamine 50 bears the Deamidated glutamine; partial mark. One can recognise a sHSP domain in the interval 52-162 (VFRSVLDSGI…GHSERAIPVS (111 aa)). An N6-acetyllysine mark is found at lysine 70 and lysine 99. Residue histidine 100 participates in Zn(2+) binding. Asparagine 101 bears the Deamidated asparagine; partial mark. Positions 102 and 107 each coordinate Zn(2+). Serine 122 is subject to Phosphoserine. Deamidated asparagine; partial is present on asparagine 123. The interval 144–173 (PKVPSGVDAGHSERAIPVSREEKPSSAPSS) is disordered. Positions 153–167 (GHSERAIPVSREEKP) are enriched in basic and acidic residues. Zn(2+) is bound at residue histidine 154. Serine 162 carries O-linked (GlcNAc) serine glycosylation.

The protein belongs to the small heat shock protein (HSP20) family. Heteromer composed of three CRYAA and one CRYAB subunits. Inter-subunit bridging via zinc ions enhances stability, which is crucial as there is no protein turn over in the lens. Can also form homodimers and homotetramers (dimers of dimers) which serve as the building blocks of homooligomers. Within homooligomers, the zinc-binding motif is created from residues of 3 different molecules. His-100 and Glu-102 from one molecule are ligands of the zinc ion, and His-107 and His-154 residues from additional molecules complete the site with tetrahedral coordination geometry. Part of a complex required for lens intermediate filament formation composed of BFSP1, BFSP2 and CRYAA. In terms of processing, acetylation at Lys-70 may increase chaperone activity. Undergoes age-dependent proteolytical cleavage at the C-terminus.

It localises to the cytoplasm. It is found in the nucleus. In terms of biological role, contributes to the transparency and refractive index of the lens. Acts as a chaperone, preventing aggregation of various proteins under a wide range of stress conditions. Required for the correct formation of lens intermediate filaments as part of a complex composed of BFSP1, BFSP2 and CRYAA. This is Alpha-crystallin A chain (CRYAA) from Halichoerus grypus (Gray seal).